Here is a 642-residue protein sequence, read N- to C-terminus: MPVITLPDGSQRHYDHAVSPMDVALDIGPGLAKACIAGRVNGELVDACDLIENDAQLSIITAKDEDGLEIIRHSCAHLLGHAIKQLWPHTKMAIGPVIDNGFYYDVDLDRTLTQEDVEALEKRMHELAEKNYDVIKKKVSWHEARETFANRGESYKVSILDENIAHDDKPGLYFHEEYVDMCRGPHVPNMRFCHHFKLMKTAGAYWRGDSNNKMLQRIYGTAWADKKALNAYLQRLEEAAKRDHRKIGKQLDLYHMQEEAPGMVFWHNDGWTIFRELEVFVRSKLKEYQYQEVKGPFMMDRVLWEKTGHWDNYKDAMFTTSSENREYCIKPMNCPGHVQIFNQGLKSYRDLPLRMAEFGSCHRNEPSGSLHGLMRVRGFTQDDAHIFCTEEQIRDEVNGCIRLVYDMYSTFGFEKIVVKLSTRPEKRIGSDEMWDRAEADLAVALEENNIPFEYQLGEGAFYGPKIEFTLYDCLDRAWQCGTVQLDFSLPSRLSASYVGEDNERKVPVMIHRAILGSMERFIGILTEEFAGFFPTWLAPVQVVIMNITDSQSEYVNELTQKLSNAGIRVKADLRNEKIGFKIREHTLRRVPYMLVCGDKEVESGKVAVRTRRGKDLGSMDVNEVIEKLQQEIRSRSLKQLEE.

The region spanning 1 to 61 (MPVITLPDGS…ENDAQLSIIT (61 aa)) is the TGS domain. The catalytic stretch occupies residues 243 to 534 (DHRKIGKQLD…LTEEFAGFFP (292 aa)). The residue at position 286 (K286) is an N6-acetyllysine. 3 residues coordinate Zn(2+): C334, H385, and H511.

The protein belongs to the class-II aminoacyl-tRNA synthetase family. As to quaternary structure, homodimer. It depends on Zn(2+) as a cofactor.

It localises to the cytoplasm. It catalyses the reaction tRNA(Thr) + L-threonine + ATP = L-threonyl-tRNA(Thr) + AMP + diphosphate + H(+). Functionally, catalyzes the attachment of threonine to tRNA(Thr) in a two-step reaction: L-threonine is first activated by ATP to form Thr-AMP and then transferred to the acceptor end of tRNA(Thr). Also edits incorrectly charged L-seryl-tRNA(Thr). The sequence is that of Threonine--tRNA ligase from Escherichia coli O8 (strain IAI1).